The following is a 172-amino-acid chain: Acetolactate synthase small subunit (172 aa).

Residues 4–79 (IITLTVVNRS…DVLKVTDITN (76 aa)) enclose the ACT domain.

This sequence belongs to the acetolactate synthase small subunit family. In terms of assembly, dimer of large and small chains.

It carries out the reaction 2 pyruvate + H(+) = (2S)-2-acetolactate + CO2. The protein operates within amino-acid biosynthesis; L-isoleucine biosynthesis; L-isoleucine from 2-oxobutanoate: step 1/4. Its pathway is amino-acid biosynthesis; L-valine biosynthesis; L-valine from pyruvate: step 1/4. The polypeptide is Acetolactate synthase small subunit (ilvH) (Bacillus subtilis (strain 168)).